We begin with the raw amino-acid sequence, 258 residues long: Ribosome maturation factor RimP (258 aa).

2 disordered regions span residues 48–88 (PQRP…PTSA) and 212–258 (IFKK…AEND). A compositionally biased stretch (basic residues) spans 215 to 224 (KPQKPGKKPG).

The protein belongs to the RimP family.

The protein resides in the cytoplasm. Functionally, required for maturation of 30S ribosomal subunits. This Desulfovibrio desulfuricans (strain ATCC 27774 / DSM 6949 / MB) protein is Ribosome maturation factor RimP.